The following is a 135-amino-acid chain: Putative pre-16S rRNA nuclease (135 aa).

The protein belongs to the YqgF nuclease family.

It is found in the cytoplasm. Its function is as follows. Could be a nuclease involved in processing of the 5'-end of pre-16S rRNA. The protein is Putative pre-16S rRNA nuclease of Thermus thermophilus (strain ATCC 27634 / DSM 579 / HB8).